Reading from the N-terminus, the 105-residue chain is Large ribosomal subunit protein uL24 (105 aa).

It belongs to the universal ribosomal protein uL24 family. In terms of assembly, part of the 50S ribosomal subunit.

Its function is as follows. One of two assembly initiator proteins, it binds directly to the 5'-end of the 23S rRNA, where it nucleates assembly of the 50S subunit. In terms of biological role, one of the proteins that surrounds the polypeptide exit tunnel on the outside of the subunit. This is Large ribosomal subunit protein uL24 from Methylocella silvestris (strain DSM 15510 / CIP 108128 / LMG 27833 / NCIMB 13906 / BL2).